The chain runs to 146 residues: D-aminoacyl-tRNA deacylase (146 aa).

The Gly-cisPro motif, important for rejection of L-amino acids motif lies at 138–139 (GP).

It belongs to the DTD family. Homodimer.

The protein localises to the cytoplasm. The catalysed reaction is glycyl-tRNA(Ala) + H2O = tRNA(Ala) + glycine + H(+). It catalyses the reaction a D-aminoacyl-tRNA + H2O = a tRNA + a D-alpha-amino acid + H(+). An aminoacyl-tRNA editing enzyme that deacylates mischarged D-aminoacyl-tRNAs. Also deacylates mischarged glycyl-tRNA(Ala), protecting cells against glycine mischarging by AlaRS. Acts via tRNA-based rather than protein-based catalysis; rejects L-amino acids rather than detecting D-amino acids in the active site. By recycling D-aminoacyl-tRNA to D-amino acids and free tRNA molecules, this enzyme counteracts the toxicity associated with the formation of D-aminoacyl-tRNA entities in vivo and helps enforce protein L-homochirality. This is D-aminoacyl-tRNA deacylase from Stenotrophomonas maltophilia (strain R551-3).